The primary structure comprises 995 residues: MATRGGAGVAMAVWSLLSARAVTAFLLLFLPRFLQAQTFSFPFQQPEKCDNNQYFDISALSCVPCGANQRQDARGTSCVCLPGFQMISNNGGPAIICKKCPENMKGVTEDGWNCISCPSDLTAEGKCHCPIGHILVERDINGTLLSQATCELCDGNENSFMVVNALGDRCVRCEPTFVNTSRSCACSEPNILTGGLCFSSTGNFPLRRISAARYGEVGMSLTSEWFAKYLQSSAAACWVYANLTSCQALGNMCVMNMNSYDFATFDACGLFQFIFENTAGLSTVHSISFWRQNLPWLFYGDQLGLAPQVLSSTSLPTNFSFKGENQNTKLKFVAASYDIRGNFLKWQTLEGGVLQLCPDTETRLNAAYSFGTTYQQNCEIPISKILIDFPTPIFYDVYLEYTDENQHQYILAVPVLNLNLQHNKIFVNQDSNSGKWLLTRRIFLVDAVSGRENDLGTQPRVIRVATQISLSVHLVPNTINGNIYPPLITIAYSDIDIKDANSQSVKVSFSVTYEMDHGEAHVQTDIALGVLGGLAVLASLLKTAGWKRRIGSPMIDLQTVVKFLVYYAGDLANVFFIITVGTGLYWLIFFKAQKSVSVLLPMPIQEERFVTYVGCAFALKALQFLHKLISQITIDVFFIDWERPKGKVLKAVEGEGGVRSATVPVSIWRTYFVANEWNEIQTVRKINSLFQVLTVLFFLEVVGFKNLALMDSSSSLSRNPPSYIAPYSCILRYAVSAALWLAIGIIQVVFFAVFYERFIEDKIRQFVDLCSMSNISVFLLSHKCFGYYIHGRSVHGHADTNMEEMNMNLKREAENLCSQRGLVPNTDGQTFEIAISNQMRQHYDRIHETLIRKNGPARLLSSSASTFEQSIKAYHMMNKFLGSFIDHVHKEMDYFIKDKLLLERILGMEFMEPMEKSIFYNDEGYSFSSVLYYGNEATLLIFDLLFFCVVDLACQNFILASFLTYLQQEIFRYIRNTVGQKNLASKTLVDQRFLI.

Positions 1 to 36 (MATRGGAGVAMAVWSLLSARAVTAFLLLFLPRFLQA) are cleaved as a signal peptide. The segment at 37 to 280 (QTFSFPFQQP…FQFIFENTAG (244 aa)) is cysteine-rich. Over 37-519 (QTFSFPFQQP…SVTYEMDHGE (483 aa)) the chain is Extracellular. Disulfide bonds link cysteine 49–cysteine 62, cysteine 65–cysteine 78, cysteine 80–cysteine 97, cysteine 100–cysteine 114, cysteine 117–cysteine 127, cysteine 129–cysteine 150, cysteine 153–cysteine 170, cysteine 173–cysteine 184, cysteine 186–cysteine 197, cysteine 237–cysteine 246, and cysteine 253–cysteine 268. Asparagine 141 is a glycosylation site (N-linked (GlcNAc...) asparagine). Asparagine 179 carries N-linked (GlcNAc...) asparagine glycosylation. Asparagine 242 carries an N-linked (GlcNAc...) asparagine glycan. Residue asparagine 318 is glycosylated (N-linked (GlcNAc...) asparagine). Cysteine 357 and cysteine 378 form a disulfide bridge. Residues 520-548 (AHVQTDIALGVLGGLAVLASLLKTAGWKR) traverse the membrane as a helical segment. Residues 549-558 (RIGSPMIDLQ) lie on the Cytoplasmic side of the membrane. The chain crosses the membrane as a helical span at residues 559 to 590 (TVVKFLVYYAGDLANVFFIITVGTGLYWLIFF). At 591-603 (KAQKSVSVLLPMP) the chain is on the extracellular side. Residues 604–631 (IQEERFVTYVGCAFALKALQFLHKLISQ) form a helical membrane-spanning segment. Residues 632–670 (ITIDVFFIDWERPKGKVLKAVEGEGGVRSATVPVSIWRT) are Cytoplasmic-facing. The helical intramembrane region spans 671 to 679 (YFVANEWNE). Residues 671-701 (YFVANEWNEIQTVRKINSLFQVLTVLFFLEV) form a discontinuously helical membrane-spanning segment. The stretch at 680–688 (IQTVRKINS) is an intramembrane region. An intramembrane region (helical) is located at residues 689-701 (LFQVLTVLFFLEV). Residues 702–731 (VGFKNLALMDSSSSLSRNPPSYIAPYSCIL) lie on the Extracellular side of the membrane. An intramembrane region (helical) is located at residues 732-757 (RYAVSAALWLAIGIIQVVFFAVFYER). The discontinuously helical transmembrane segment at 732–771 (RYAVSAALWLAIGIIQVVFFAVFYERFIEDKIRQFVDLCS) threads the bilayer. Residues 758 to 762 (FIEDK) lie within the membrane without spanning it. Residues 763–771 (IRQFVDLCS) constitute an intramembrane region (helical). At 772 to 926 (MSNISVFLLS…SIFYNDEGYS (155 aa)) the chain is on the cytoplasmic side. Positions 828-917 (GQTFEIAISN…MEFMEPMEKS (90 aa)) form a coiled coil. An intramembrane region (helical) is located at residues 927–929 (FSS). A discontinuously helical transmembrane segment spans residues 927–952 (FSSVLYYGNEATLLIFDLLFFCVVDL). Residues 930–936 (VLYYGNE) lie within the membrane without spanning it. Positions 937–952 (ATLLIFDLLFFCVVDL) form an intramembrane region, helical. The Extracellular portion of the chain corresponds to 953–957 (ACQNF). A helical membrane pass occupies residues 958–985 (ILASFLTYLQQEIFRYIRNTVGQKNLAS). The Cytoplasmic portion of the chain corresponds to 986-995 (KTLVDQRFLI).

In terms of assembly, homodimer. Part of the tectonic-like complex (also named B9 complex). Interacts with DNAJB9, DNAJC10 and mutated SFTPC. Interacts with SYNE2 during the early establishment of cell polarity. Interacts (via C-terminus) with FLNA. Interacts with TMEM218. Interacts with WNT5A. Interacts with ROR2. As to expression, widely expressed in adult and fetal tissues. Expressed at higher level in spinal cord.

Its subcellular location is the cell membrane. The protein resides in the endoplasmic reticulum membrane. The protein localises to the cell projection. It is found in the cilium. It localises to the cytoplasm. Its subcellular location is the cytoskeleton. The protein resides in the cilium basal body. In terms of biological role, required for ciliary structure and function. Part of the tectonic-like complex which is required for tissue-specific ciliogenesis and may regulate ciliary membrane composition. Involved in centrosome migration to the apical cell surface during early ciliogenesis. Involved in the regulation of cilia length and appropriate number through the control of centrosome duplication. Is a key regulator of stereociliary bundle orientation. Required for epithelial cell branching morphology. Essential for endoplasmic reticulum-associated degradation (ERAD) of surfactant protein C (SFTPC). Involved in the negative regulation of canonical Wnt signaling, and activation of the non-canonical cascade stimulated by WNT5A. In non-canonical Wnt signaling, it may act as ROR2 coreceptor. The polypeptide is Meckelin (TMEM67) (Homo sapiens (Human)).